Reading from the N-terminus, the 433-residue chain is Nuclear distribution protein PAC1 (433 aa).

A LisH domain is found at 8 to 40; it reads QKDELHRAMLAYLHAAGMHNAYAALQHDAALAD. Residues 57 to 84 are a coiled coil; the sequence is SVIRLQKKVIDLENRNAALLAELAAAAR. WD repeat units lie at residues 103-144, 146-184, 188-227, 230-269, 272-336, 339-378, and 381-429; these read SHRA…RTLK, HTKA…TNVK, GHDH…CIKT, GHAE…TKME, GHEH…CLRT, GHDN…CTKT, and AHSH…QTIK.

It belongs to the WD repeat LIS1/nudF family. As to quaternary structure, self-associates. Interacts with NDL1 and dynein.

It is found in the cytoplasm. Its subcellular location is the cytoskeleton. The protein resides in the spindle pole. Functionally, positively regulates the activity of the minus-end directed microtubule motor protein dynein. Plays a central role in positioning the mitotic spindle at the bud neck during cell division. Targets cytoplasmic dynein to microtubule plus ends, thereby promoting dynein-mediated microtubule sliding along the bud cortex and consequently the movement of the mitotic spindle to the bud neck. The chain is Nuclear distribution protein PAC1 from Cryptococcus neoformans var. neoformans serotype D (strain B-3501A) (Filobasidiella neoformans).